The chain runs to 362 residues: Mannose-1-phosphate guanyltransferase (362 aa).

The protein belongs to the transferase hexapeptide repeat family.

It is found in the cytoplasm. The catalysed reaction is alpha-D-mannose 1-phosphate + GTP + H(+) = GDP-alpha-D-mannose + diphosphate. The protein operates within nucleotide-sugar biosynthesis; GDP-alpha-D-mannose biosynthesis; GDP-alpha-D-mannose from alpha-D-mannose 1-phosphate (GTP route): step 1/1. Involved in cell wall synthesis where it is required for glycosylation. Involved in cell cycle progression through cell-size checkpoint. The sequence is that of Mannose-1-phosphate guanyltransferase (MPG1) from Debaryomyces hansenii (strain ATCC 36239 / CBS 767 / BCRC 21394 / JCM 1990 / NBRC 0083 / IGC 2968) (Yeast).